The sequence spans 542 residues: CTP synthase (542 aa).

The interval 1-265 (MARYVFITGG…DNEVLAAFGI (265 aa)) is amidoligase domain. Residue Ser13 participates in CTP binding. Residue Ser13 participates in UTP binding. Residues 14-19 (SLGKGI) and Asp71 each bind ATP. Residues Asp71 and Glu139 each coordinate Mg(2+). Residues 146–148 (DIE), 186–191 (KTKPTQ), and Lys222 contribute to the CTP site. UTP contacts are provided by residues 186–191 (KTKPTQ) and Lys222. The Glutamine amidotransferase type-1 domain maps to 291–541 (TIAIVGKYTG…IEAALEQSRL (251 aa)). Gly353 contributes to the L-glutamine binding site. Cys380 acts as the Nucleophile; for glutamine hydrolysis in catalysis. Residues 381–384 (FGMQ), Glu404, and Arg469 each bind L-glutamine. Residues His514 and Glu516 contribute to the active site.

It belongs to the CTP synthase family. Homotetramer.

It catalyses the reaction UTP + L-glutamine + ATP + H2O = CTP + L-glutamate + ADP + phosphate + 2 H(+). The enzyme catalyses L-glutamine + H2O = L-glutamate + NH4(+). It carries out the reaction UTP + NH4(+) + ATP = CTP + ADP + phosphate + 2 H(+). It functions in the pathway pyrimidine metabolism; CTP biosynthesis via de novo pathway; CTP from UDP: step 2/2. With respect to regulation, allosterically activated by GTP, when glutamine is the substrate; GTP has no effect on the reaction when ammonia is the substrate. The allosteric effector GTP functions by stabilizing the protein conformation that binds the tetrahedral intermediate(s) formed during glutamine hydrolysis. Inhibited by the product CTP, via allosteric rather than competitive inhibition. Catalyzes the ATP-dependent amination of UTP to CTP with either L-glutamine or ammonia as the source of nitrogen. Regulates intracellular CTP levels through interactions with the four ribonucleotide triphosphates. This Rhizobium meliloti (strain 1021) (Ensifer meliloti) protein is CTP synthase.